The primary structure comprises 325 residues: MGLTEQKQKHMEQLSDKNGIISALAFDQRGALKRLMAKYQSEEPTVSQIEALKVLVAEELTPYASSMLLDPEYGLPATKVLDDNAGLLLAYEKTGYDTSSTKRLPDCLDIWSAKRIKEEGADAVKFLLYYDVDSSDEVNEEKEAYIERIGSECVAEDIPFFLEILSYDEKITDSSGIEYAKIKPRKVIEAMKVFSNPRFNIDVLKVEVPVNMDYVEGFAQGETAYNKATAAAYFREQDQATLLPYIFLSAGVPAQLFQETLVFAKEAGAKFNGVLCGRATWAGSVKEYVEKGEAGARQWLRTIGFQNIDELNKILQKTATSWKER.

It belongs to the aldolase LacD family.

The catalysed reaction is D-tagatofuranose 1,6-bisphosphate = D-glyceraldehyde 3-phosphate + dihydroxyacetone phosphate. Its pathway is carbohydrate metabolism; D-tagatose 6-phosphate degradation; D-glyceraldehyde 3-phosphate and glycerone phosphate from D-tagatose 6-phosphate: step 2/2. This Streptococcus agalactiae serotype III (strain NEM316) protein is Tagatose 1,6-diphosphate aldolase 1.